We begin with the raw amino-acid sequence, 979 residues long: Peptidyl-glycine alpha-amidating monooxygenase (979 aa).

Positions 1 to 24 are cleaved as a signal peptide; sequence MAGRARSRLLLLLGLLALQSSCLA. The segment at 1 to 497 is peptidylglycine alpha-hydroxylating monooxygenase; that stretch reads MAGRARSRLL…EGPWEPELAG (497 aa). A propeptide spanning residues 25–34 is cleaved from the precursor; that stretch reads FRSPLSVFKR. Over 35 to 869 the chain is Intragranular; that stretch reads FKETTRSFSN…KKLIKDPGSG (835 aa). Cystine bridges form between Cys-46-Cys-185, Cys-80-Cys-125, Cys-113-Cys-130, Cys-226-Cys-333, and Cys-292-Cys-314. Cu(2+) is bound by residues His-106 and His-107. Residues His-171, His-241, His-243, and Met-313 each contribute to the Cu(2+) site. Residues 498–823 are peptidyl-alpha-hydroxyglycine alpha-amidating lyase; sequence DFHVEEALEW…SRLEVEHRSV (326 aa). 4 NHL repeats span residues 501–544, 570–611, 620–665, and 673–717; these read VEEA…NSFD, AEIL…LEPR, LGRS…FSPS, and GEES…FKTD. Position 520 (Val-520) interacts with Ca(2+). Residue Arg-533 participates in a protein binding. His-585 contacts Zn(2+). Leu-587 contributes to the Ca(2+) binding site. A disulfide bond links Cys-634 and Cys-655. Tyr-654 provides a ligand contact to a protein. Residue His-690 participates in Zn(2+) binding. A disulfide bridge links Cys-702 with Cys-713. Residue Arg-706 coordinates a protein. A glycan (N-linked (GlcNAc...) asparagine) is linked at Asn-765. An NHL 5 repeat occupies 769–812; sequence GEIIDVFKPVRKHFDMPHDIVASEDGTVYIGDAHTNTVWKFTLT. His-786 contacts Zn(2+). Asp-787 contributes to the Ca(2+) binding site. Residues 870-893 traverse the membrane as a helical segment; sequence VPVVLITTLLVIPVVVLLAIAMFI. Residues 894–979 are Cytoplasmic-facing; it reads RWKKSRAFGD…APLPTPAPSS (86 aa). A phosphoserine mark is found at Ser-924, Ser-925, Ser-935, and Ser-948. Residues 931–948 form an interaction with RASSF9 region; it reads NFFASRKGYSRKGFDRVS. A disordered region spans residues 943-979; the sequence is GFDRVSTEGSDQEKDEDDGSESEEEYSAPLPTPAPSS. Thr-949 carries the post-translational modification Phosphothreonine. Residue Ser-952 is modified to Phosphoserine; by UHMK1. Residues 955-968 are compositionally biased toward acidic residues; sequence EKDEDDGSESEEEY. Ser-964 carries the post-translational modification Phosphoserine.

This sequence in the C-terminal section; belongs to the peptidyl-alpha-hydroxyglycine alpha-amidating lyase family. In the N-terminal section; belongs to the copper type II ascorbate-dependent monooxygenase family. As to quaternary structure, monomer. Interacts with RASSF9. The cofactor is Zn(2+). Requires Cu(2+) as cofactor.

It is found in the cytoplasmic vesicle. Its subcellular location is the secretory vesicle membrane. The enzyme catalyses a [peptide]-C-terminal glycine + 2 L-ascorbate + O2 = a [peptide]-C-terminal (2S)-2-hydroxyglycine + 2 monodehydro-L-ascorbate radical + H2O. It catalyses the reaction a [peptide]-C-terminal (2S)-2-hydroxyglycine = a [peptide]-C-terminal amide + glyoxylate. The catalysed reaction is N-dodecanoylglycine + 2 L-ascorbate + O2 = N-dodecanoyl-(2S)-hydroxyglycine + 2 monodehydro-L-ascorbate radical + H2O. It carries out the reaction N-dodecanoyl-(2S)-hydroxyglycine = dodecanamide + glyoxylate. The enzyme catalyses N-(9Z,12Z,15Z)-octadecatrienoylglycine + 2 L-ascorbate + O2 = N-(9Z,12Z,15Z)-octadecatrienoyl-(2S)-hydroxyglycine + 2 monodehydro-L-ascorbate radical + H2O. It catalyses the reaction N-(9Z,12Z,15Z)-octadecatrienoyl-(2S)-hydroxyglycine = (9Z,12Z,15Z)-octadecatrienamide + glyoxylate. The catalysed reaction is N-(9Z-octadecenoyl)glycine + 2 L-ascorbate + O2 = N-(9Z-octadecenoyl)-(2S)-hydroxyglycine + 2 monodehydro-L-ascorbate radical + H2O. It carries out the reaction N-(9Z-octadecenoyl)-(2S)-hydroxyglycine = (9Z)-octadecenamide + glyoxylate. The enzyme catalyses N-tetradecanoylglycine + 2 L-ascorbate + O2 = N-tetradecanoyl-(2S)-hydroxyglycine + 2 monodehydro-L-ascorbate radical + H2O. It catalyses the reaction N-tetradecanoyl-(2S)-hydroxyglycine = tetradecamide + glyoxylate. The catalysed reaction is N-decanoylglycine + 2 L-ascorbate + O2 = N-decanoyl-(2S)-hydroxyglycine + 2 monodehydro-L-ascorbate radical + H2O. It carries out the reaction N-decanoyl-(2S)-hydroxyglycine = decanamide + glyoxylate. The enzyme catalyses N-octanoylglycine + 2 L-ascorbate + O2 = N-octanoyl-(2S)-hydroxyglycine + 2 monodehydro-L-ascorbate radical + H2O. It catalyses the reaction N-octanoyl-(2S)-hydroxyglycine = octanamide + glyoxylate. With respect to regulation, PAM activity is inhibited by EDTA, phenylglyoxal and diethyl pyrocarbonate. PAL activity is stimulated by cadmium and inhibited by mercury. Its function is as follows. Bifunctional enzyme that catalyzes amidation of the C-terminus of proteins. Alpha-amidation is present at the C-terminus of many endocrine hormones and neuropeptides and is required for their activity. C-terminal amidation also takes place in response to protein fragmentation triggered by oxidative stress, promoting degradation of amidated protein fragments by the proteasome. Alpha-amidation involves two sequential reactions, both of which are catalyzed by separate catalytic domains of the enzyme. The first step, catalyzed by peptidyl alpha-hydroxylating monooxygenase (PHM) domain, is the copper-, ascorbate-, and O2- dependent stereospecific hydroxylation (with S stereochemistry) at the alpha-carbon (C-alpha) of the C-terminal glycine of the peptidylglycine substrate. The second step, catalyzed by the peptidylglycine amidoglycolate lyase (PAL) domain, is the zinc-dependent cleavage of the N-C-alpha bond, producing the alpha-amidated peptide and glyoxylate. Similarly, catalyzes the two-step conversion of an N-fatty acylglycine to a primary fatty acid amide and glyoxylate. This chain is Peptidyl-glycine alpha-amidating monooxygenase, found in Mus musculus (Mouse).